A 470-amino-acid polypeptide reads, in one-letter code: Solvent efflux pump outer membrane protein SrpC (470 aa).

An N-terminal signal peptide occupies residues methionine 1–glycine 16. Cysteine 17 carries N-palmitoyl cysteine lipidation. Cysteine 17 carries S-diacylglycerol cysteine lipidation. The interval leucine 104–glycine 123 is disordered.

The protein belongs to the outer membrane factor (OMF) (TC 1.B.17) family.

It is found in the cell outer membrane. The outer membrane component of an organic solvent efflux pump. Involved in export of a number of low log POW compounds including hexane (log POW 3.5), toluene (log POW 2.5) and dimethylphthalate (log POW 2.3). The solvent resistance phenotype has been postulated to depend on the operon expression level. The chain is Solvent efflux pump outer membrane protein SrpC (srpC) from Pseudomonas putida (Arthrobacter siderocapsulatus).